We begin with the raw amino-acid sequence, 353 residues long: Stomatin-like protein 2, mitochondrial (353 aa).

The transit peptide at 1–28 (MLARAARGTGALLLRGSVQASGRVPRRA) directs the protein to the mitochondrion. S17 is subject to Phosphoserine; by PKC/PRKCZ. Y124 carries the phosphotyrosine modification. K145 is subject to N6-acetyllysine; alternate. N6-succinyllysine; alternate is present on K145. Positions 215–252 (INVAEGKKQAQILASEAEKAEQINQAAGEASAVLAKAK) form a coiled coil. K233 is modified (N6-acetyllysine). The interval 324–353 (VPGAQNSSQSRRDVQATDTSIEELGRVKLS) is disordered. Residue S330 is modified to Phosphoserine.

The protein belongs to the band 7/mec-2 family. As to quaternary structure, forms homooligomers. Interacts with MFN2; may form heterooligomers. Interacts with PHB1 and PHB2; recruits them to cardiolipin-enriched mitochondrial membranes and stabilizes them. Interacts with CACNA2D2.

It localises to the cell membrane. Its subcellular location is the mitochondrion. The protein localises to the mitochondrion inner membrane. It is found in the mitochondrion intermembrane space. The protein resides in the membrane raft. It localises to the cytoplasm. Its subcellular location is the cytoskeleton. Its function is as follows. Mitochondrial protein that probably regulates the biogenesis and the activity of mitochondria. Stimulates cardiolipin biosynthesis, binds cardiolipin-enriched membranes where it recruits and stabilizes some proteins including prohibitin and may therefore act in the organization of functional microdomains in mitochondrial membranes. Through regulation of the mitochondrial function may play a role into several biological processes including cell migration, cell proliferation, T-cell activation, calcium homeostasis and cellular response to stress. May play a role in calcium homeostasis through negative regulation of calcium efflux from mitochondria. Required for mitochondrial hyperfusion a pro-survival cellular response to stress which results in increased ATP production by mitochondria. May also regulate the organization of functional domains at the plasma membrane and play a role in T-cell activation through association with the T-cell receptor signaling complex and its regulation. This Mus musculus (Mouse) protein is Stomatin-like protein 2, mitochondrial (Stoml2).